The following is a 2635-amino-acid chain: MAAQPLYMEGMASTHQANCIFGEHAGSQCLSNCVMYLASSYYNSETPLVDRASLDDVLEQGMRLDLLLRKSGMLGFRQYAQLHHIPGFLRTDDWATKIFQSPEFYGLIGQDAAIREPFIESLRSVLSRNYAGTVQYLIIICQSKAGAIVVKDKTYYMFDPHCIPNIPNSPAHVIKTNDVGVLLPYIATHDTEYTGCFLYFIPHDYISPEHYIANHYRTIVFEELHGPRMDISRGVESCSITEITSPSVSPAPSEAPLRRDSTQSQDETRPRRPRVVIPPYDPTDRPRPPHQDRPPEQAAGYGGNKGRGGNKGRGGKTGRGGNEGRGGHQPPDEHQPPHITAEHMDQSDGQGADGDMDSTPANGETSVTETPGPEPNPPARPDREPPPTPPATPGATALLSDLTATRGQKRKFSSLKESYPIDSPPSDDDDVSQPSQQTAPDTEDIWIDDPLTPLYPLTDTPSFDITADVTPDNTHPEKAADGDFTNKTTSTDADRYASASQESLGTLVSPYDFTNLDTLLAELGRLGTAQPIPVIVDRLTSRPFREASALQAMDRILTHVVLEYGLVSGYSTAAPSKCTHVLQFFILWGEKLGIPTEDAKTLLESALEIPAMCEIVQQGRLKEPTFSRHIISKLNPCLESLHATSRQDFKSLIQAFNAEGIRIASRERETSMAELIETITARLKPNFNIVCARQDAQTIQDGVGLLRAEVNKRNAQIAQEAAYFENIITALSTFQPPPQSQQTFEVLPDLKLRTLVEHLTLVEAQVTTQTVESLQAYLQSAATAEHHLTNVPNVHSILSNISNTLKVIDYVIPKFIINTDTLAPYKQQFSYLGGELASMFSLDWPHAPAEAVEPLPVLTSLRGKIAEALTRQENKNAVDQILTDAEGLLKNITDPNGAHFHAQAVSIPVLENYVHNAGVLLKGEKSERFSRLKTAIQNLVSSESFITVTLHSTNLGNLVTNVPKLGEAFTGGPHLLTSPSVRQSLSTLCTTLLRDALDALEKKDPALLGEGTTLALETLLGYGSVQDYKETVQIISSLVGIQKLVRDQGADKWATAVTRLTDLKSTLATTAIETATKRKLYRLIQRDLKEAQKHETNRAMEEWKQKVLALDNASPERVATLLQQAPTAKAREFAEKHFKILLPVPADAPVQASPTPMEYSASPLPDPKDIDRATSIHGEQAWKKIQQAFKDFNFAVLRPADWDALAAEYQRRGSPLPAAVGPALSGFLETILGTLNDIYMDKLRSFLPDAQPFQAPPFDWLTPYQDQVSFFLRTIGLPLVRALADKISVQALRLSHALQSGDLQQATVGTPLELPATEYARIASNMKSVFNDHGLQVRSEVADYVEAQRADAHTPHVPRPKIQAPKTLIPHPDAIVADGLPAFLKTSLLQQEAKLLALQRADFESLESDMRAAEAQRKASREETQRKMAHAITQLLQQAPSAISGRPLSLQDPVGFLEGIIYDKVLERESYETGLEGLSWLEQTIKSITVYAPVEEKQRMHVLLDEVKKQRANTETALELEAAATHGDDARLLQRAVDELSPLRVKGGKAAVESWRQKIQTLKSLVQEAEQAGLLLATIDTVAGQAQETISPSTLQGLYQQGQEAMAAIKRFRDSPQLAGLQEKLAELQQYVKYKKQYLEHFEATQSVVFTAFPLTQEVTIPALHYAGPFDNLERLSRYLHIGQTQPAPGQWLLTLPTFDPTRPACVPAGGHEPPLHRQVVFSSFLEAQIRLALSVAGPVPGRGLPGTPQIRRGVEAAACFLHQWDEISRLLPEVLDTFFHNAPLPAESSSNAFLAMCVLTHLVYLAGRAVLGPREPEHAAPDAYPREVALAPRDLTYLLLAMWPSWISAILKQPSHAEAAHACLVTLPTMLKAVPYLTLEASAGPLPADMRHFATPEARLFFPARWHHVNVQEKLWLRNDFMSLCHRSPGRARIAVLVWAVTCLDPEVIRQLWSTLRPLTADESDTASGLLRVLVEMEFGPPPKTPRREAVAPGATLPPYPYGLATGERLVGQAQERSGGAGKMPVSGFEIVLGALLFRAPLRIFSTASTHRISDFEGGFQILTPLLDCCPDREPFASLAAAPRRTVPLGDPCANIHTPEEIQIFARQAAWLQYTFANYQIPSTDNPIPIVVLNANNNLENSYIPRDRKADPLRPFYVVPLKPQGRWPEIMTTATTPCRLPTSPEEAGSQFARLLQSQVSATWSDIFSRVPERLAPNAPQKSSQTMSEIHEVAATPPLTITPNKPTGTPHVSPEADPITERKRGQQPKIVADNMPSRILPSLPTPKPREPRITLPHALPVISPPAHRPSPIPHLPAPQVTEPKGVLQSKRGTLVLRPAAVIDPRKPVSAPITRYERTALQPPRTEGEGRRPPDTQPVTLTFRLPPTAPTPATAALETKTTPPSTPPHAIDISPPQTPPMSTSPHARDTSPPAEKRAAPVIRVMAPTQPSGEARVKRVEIEQGLSTRNEAPPLERSNHAVPAVTPRRTVAREIRIPPEIKAGWDTAPDIPLPHSSPESSPPTSPQPIRVDDKSPLPNLVERYARGFLDTPSVEVMSLENQDIAVDPGLLTRRIPSVVPMPHPIMWSPIVPISLQNTDIDTAKITLISFIRRIKQKVAALSASLAETVDRIKKWYL.

The tract at residues 1-233 (MAAQPLYMEG…LHGPRMDISR (233 aa)) is deubiquitination activity. The region spanning 9–223 (EGMASTHQAN…NHYRTIVFEE (215 aa)) is the Peptidase C76 domain. Residues Cys-29, Asp-159, and His-161 contribute to the active site. 4 disordered regions span residues 243–497 (ITSP…DRYA), 2238–2269 (PLTI…QQPK), 2357–2438 (RTAL…KRAA), and 2500–2533 (KAGW…DDKS). Residues 245-255 (SPSVSPAPSEA) show a composition bias toward low complexity. Composition is skewed to basic and acidic residues over residues 256–270 (PLRR…ETRP) and 282–295 (PTDR…DRPP). The interaction with inner tegument protein stretch occupies residues 316–325 (KTGRGGNEGR). Residues 330-346 (PPDEHQPPHITAEHMDQ) show a composition bias toward basic and acidic residues. Low complexity predominate over residues 448-461 (DDPLTPLYPLTDTP). A compositionally biased stretch (low complexity) spans 2379–2402 (TLTFRLPPTAPTPATAALETKTTP). Residues 2425–2437 (HARDTSPPAEKRA) show a composition bias toward basic and acidic residues.

Belongs to the herpesviridae large tegument protein family. In terms of assembly, interacts with host CUL1 and CUL4A; these interactions inhibit the E3 ligase activity of cullins. Interacts with inner tegument protein. Interacts with capsid vertex specific component CVC2. Interacts with the major capsid protein/MCP.

Its subcellular location is the virion tegument. It is found in the host cytoplasm. The protein localises to the host nucleus. The catalysed reaction is Thiol-dependent hydrolysis of ester, thioester, amide, peptide and isopeptide bonds formed by the C-terminal Gly of ubiquitin (a 76-residue protein attached to proteins as an intracellular targeting signal).. In terms of biological role, large tegument protein that plays multiple roles in the viral cycle. During viral entry, remains associated with the capsid while most of the tegument is detached and participates in the capsid transport toward the host nucleus. Plays a role in the routing of the capsid at the nuclear pore complex and subsequent uncoating. Within the host nucleus, acts as a deneddylase and promotes the degradation of nuclear CRLs (cullin-RING ubiquitin ligases) and thereby stabilizes nuclear CRL substrates, while cytoplasmic CRLs remain unaffected. These modifications prevent host cell cycle S-phase progression and create a favorable environment allowing efficient viral genome replication. Participates later in the secondary envelopment of capsids. Indeed, plays a linker role for the association of the outer viral tegument to the capsids together with the inner tegument protein. This chain is Large tegument protein deneddylase, found in Homo sapiens (Human).